A 255-amino-acid polypeptide reads, in one-letter code: Triosephosphate isomerase (255 aa).

A substrate-binding site is contributed by N9–K11. The Electrophile role is filled by H95. The active-site Proton acceptor is the E167. Residues G173, S212, and G233–G234 each bind substrate.

This sequence belongs to the triosephosphate isomerase family. Homodimer.

The protein localises to the cytoplasm. It catalyses the reaction D-glyceraldehyde 3-phosphate = dihydroxyacetone phosphate. It functions in the pathway carbohydrate biosynthesis; gluconeogenesis. It participates in carbohydrate degradation; glycolysis; D-glyceraldehyde 3-phosphate from glycerone phosphate: step 1/1. Its function is as follows. Involved in the gluconeogenesis. Catalyzes stereospecifically the conversion of dihydroxyacetone phosphate (DHAP) to D-glyceraldehyde-3-phosphate (G3P). The sequence is that of Triosephosphate isomerase from Salmonella dublin (strain CT_02021853).